We begin with the raw amino-acid sequence, 399 residues long: MSDSKEQRVQPLGLLEEDPTTSGIRLFPRDFQFQQTHGHKSSTGCLGHGPLVLQLLSFTLLAGVLVAILVQVYKVPSSLSQEQSEQDVIYQNLTQLKAAVGELSEKSKLQEIYQELIQLKAAVGELPEKSTLQEIYQELTRLKAAVGELPEKSRLQEIYQELTRLKAAVGELPEKSKQQEIYQELTRLKAAVGELPEKSKQQEIYQELTRLKAAVGELPEKSKQQEIYQELTRLKAAVGELPDQSKQQQIYQELTDLKTAFERLCCRCPKDWTFFQGNCYFISNSQRNWHDSVTACREVGAQLVVIKSAEEQNFLQLQSSRSNRFAWMGLSDLNQEGTWQWVDGSPLSSSFQRYWNSGEPNNSGDEDCAEFSGSGWNDNRCNVDNYWICKKPTACFRDE.

Topologically, residues 1-49 (MSDSKEQRVQPLGLLEEDPTTSGIRLFPRDFQFQQTHGHKSSTGCLGHG) are cytoplasmic. The Endocytosis signal motif lies at 14 to 15 (LL). A helical; Signal-anchor for type II membrane protein membrane pass occupies residues 50–70 (PLVLQLLSFTLLAGVLVAILV). Residues 71-399 (QVYKVPSSLS…KKPTACFRDE (329 aa)) are Extracellular-facing. Residue Asn-92 is glycosylated (N-linked (GlcNAc...) asparagine). 7 consecutive repeat copies span residues 108–130 (KLQE…PEKS), 131–153 (TLQE…PEKS), 154–176 (RLQE…PEKS), 177–199 (KQQE…PEKS), 200–222 (KQQE…PEKS), 223–245 (KQQE…PDQS), and 246–268 (KQQQ…CCRC). Positions 108–269 (KLQEIYQELI…AFERLCCRCP (162 aa)) are 7 X approximate tandem repeats. Intrachain disulfides connect Cys-265–Cys-395, Cys-268–Cys-279, Cys-296–Cys-389, and Cys-368–Cys-381. The region spanning 274 to 390 (FFQGNCYFIS…CNVDNYWICK (117 aa)) is the C-type lectin domain. Residues Glu-359, Asn-361, Ser-363, Glu-366, Asn-377, and Asp-378 each contribute to the Ca(2+) site. A glycan (N-linked (GlcNAc...) asparagine) is linked at Asn-361.

As to quaternary structure, homotetramer.

Its subcellular location is the membrane. In terms of biological role, probable pathogen-recognition receptor involved in peripheral immune surveillance in liver. May mediate the endocytosis of pathogens which are subsequently degraded in lysosomal compartments. Probably recognizes in a calcium-dependent manner high mannose N-linked oligosaccharides in a variety of pathogen antigens. Is a receptor for ICAM3, probably by binding to mannose-like carbohydrates. The chain is C-type lectin domain family 4 member M (CLEC4M) from Hylobates lar (Lar gibbon).